The sequence spans 264 residues: Carbonic anhydrase 7 (264 aa).

The Alpha-carbonic anhydrase domain occupies His5–Phe262. Residue His66 is the Proton donor/acceptor of the active site. Zn(2+) is bound by residues His96, His98, and His121. Position 201–202 (Thr201–Thr202) interacts with substrate.

It belongs to the alpha-carbonic anhydrase family. Zn(2+) is required as a cofactor.

It is found in the cytoplasm. It catalyses the reaction hydrogencarbonate + H(+) = CO2 + H2O. Its activity is regulated as follows. Activated by histamine, L-adrenaline, L- and D-histidine, and L- and D-phenylalanine. Inhibited by coumarins, sulfonamide derivatives such as acetazolamide (AZA), by saccharin and Foscarnet (phosphonoformate trisodium salt). In terms of biological role, reversible hydration of carbon dioxide. This chain is Carbonic anhydrase 7 (CA7), found in Homo sapiens (Human).